The sequence spans 298 residues: 2-dehydro-3-deoxy-D-arabinonate dehydratase (298 aa).

I86 provides a ligand contact to substrate. The Mg(2+) site is built by E148, E150, and D169. Residues K187 and T261 each contribute to the substrate site.

The protein belongs to the FAH family. As to quaternary structure, homotetramer. Mg(2+) serves as cofactor. The cofactor is Ca(2+).

It catalyses the reaction 2-dehydro-3-deoxy-D-arabinonate = 2,5-dioxopentanoate + H2O. Functionally, participates in a pentose oxidation pathway that converts D-arabinonate to 2-oxoglutarate. This Saccharolobus solfataricus (strain ATCC 35092 / DSM 1617 / JCM 11322 / P2) (Sulfolobus solfataricus) protein is 2-dehydro-3-deoxy-D-arabinonate dehydratase.